Here is a 287-residue protein sequence, read N- to C-terminus: Glycine--tRNA ligase alpha subunit (287 aa).

Belongs to the class-II aminoacyl-tRNA synthetase family. As to quaternary structure, tetramer of two alpha and two beta subunits.

The protein localises to the cytoplasm. It carries out the reaction tRNA(Gly) + glycine + ATP = glycyl-tRNA(Gly) + AMP + diphosphate. This is Glycine--tRNA ligase alpha subunit from Campylobacter jejuni subsp. jejuni serotype O:6 (strain 81116 / NCTC 11828).